A 303-amino-acid polypeptide reads, in one-letter code: Small ribosomal subunit protein uS2 (303 aa).

The interval 258 to 303 (ATLRENAVVTENEVKKTDEEEGASSEAARADAQNEEAVAKPGEEVE) is disordered. Over residues 294–303 (AVAKPGEEVE) the composition is skewed to basic and acidic residues.

Belongs to the universal ribosomal protein uS2 family.

This chain is Small ribosomal subunit protein uS2, found in Bifidobacterium animalis subsp. lactis (strain AD011).